A 156-amino-acid chain; its full sequence is Arginine repressor (156 aa).

It belongs to the ArgR family.

The protein resides in the cytoplasm. It functions in the pathway amino-acid biosynthesis; L-arginine biosynthesis [regulation]. Regulates arginine biosynthesis genes. The sequence is that of Arginine repressor from Pectobacterium atrosepticum (strain SCRI 1043 / ATCC BAA-672) (Erwinia carotovora subsp. atroseptica).